The sequence spans 269 residues: Tryptophan synthase alpha chain (269 aa).

Active-site proton acceptor residues include glutamate 56 and aspartate 67.

Belongs to the TrpA family. In terms of assembly, tetramer of two alpha and two beta chains.

It carries out the reaction (1S,2R)-1-C-(indol-3-yl)glycerol 3-phosphate + L-serine = D-glyceraldehyde 3-phosphate + L-tryptophan + H2O. The protein operates within amino-acid biosynthesis; L-tryptophan biosynthesis; L-tryptophan from chorismate: step 5/5. Functionally, the alpha subunit is responsible for the aldol cleavage of indoleglycerol phosphate to indole and glyceraldehyde 3-phosphate. In Mycobacterium ulcerans (strain Agy99), this protein is Tryptophan synthase alpha chain.